The sequence spans 243 residues: Tegument protein UL14 homolog (243 aa).

It belongs to the alphaherpesvirinae HHV-1 UL14 protein family. Post-translationally, phosphorylated.

It localises to the virion tegument. Its subcellular location is the host cytoplasm. It is found in the host nucleus. Contributes to the nuclear transport of the viral transcriptional activator VP16 homolog during the early phase of infection. Therefore, participates indirectly in the regulation of the immediate-early gene expression. Additionally, seems to be important for efficient nuclear targeting of capsids. In Gallid herpesvirus 2 (strain Chicken/Md5/ATCC VR-987) (GaHV-2), this protein is Tegument protein UL14 homolog (MDV026).